Reading from the N-terminus, the 169-residue chain is Lipoprotein signal peptidase (169 aa).

4 consecutive transmembrane segments (helical) span residues 4-24 (PICSTGLRWLWLAVLVVIVDL), 42-62 (LIPFFNLTYAQNFGAAFSFLA), 70-90 (WFFAGIAIGISVLLMVLMYRS), and 102-122 (ALIIGGALGNLFDRMVHGAVI). Residues Asp-123 and Asp-141 contribute to the active site. The chain crosses the membrane as a helical span at residues 137–157 (FNIADTAICIGAALVIFEGFI).

It belongs to the peptidase A8 family.

It is found in the cell inner membrane. It catalyses the reaction Release of signal peptides from bacterial membrane prolipoproteins. Hydrolyzes -Xaa-Yaa-Zaa-|-(S,diacylglyceryl)Cys-, in which Xaa is hydrophobic (preferably Leu), and Yaa (Ala or Ser) and Zaa (Gly or Ala) have small, neutral side chains.. Its pathway is protein modification; lipoprotein biosynthesis (signal peptide cleavage). In terms of biological role, this protein specifically catalyzes the removal of signal peptides from prolipoproteins. The chain is Lipoprotein signal peptidase from Yersinia enterocolitica serotype O:8 / biotype 1B (strain NCTC 13174 / 8081).